A 54-amino-acid chain; its full sequence is MKKWECVVCGFIYDEAEGLPDEGIEPGTAWNNVPEDWVCPDCGVGKDDFEMVEI.

Positions 1–52 (MKKWECVVCGFIYDEAEGLPDEGIEPGTAWNNVPEDWVCPDCGVGKDDFEMV) constitute a Rubredoxin-like domain. Positions 6, 9, 39, and 42 each coordinate Fe cation.

This sequence belongs to the rubredoxin family. Fe(3+) serves as cofactor.

The protein localises to the cytoplasm. It participates in hydrocarbon metabolism; alkane degradation. Functionally, involved in the hydrocarbon hydroxylating system, which transfers electrons from NADH to rubredoxin reductase and then through rubredoxin to alkane 1 monooxygenase. In Alcanivorax borkumensis (strain ATCC 700651 / DSM 11573 / NCIMB 13689 / SK2), this protein is Rubredoxin-1 (rubA).